The primary structure comprises 248 residues: PF03932 family protein CutC (248 aa).

This sequence belongs to the CutC family. As to quaternary structure, homodimer.

The protein localises to the cytoplasm. In Escherichia coli O127:H6 (strain E2348/69 / EPEC), this protein is PF03932 family protein CutC.